The primary structure comprises 180 residues: ATP-dependent protease subunit HslV (180 aa).

Residue Thr-7 is part of the active site. Residues Gly-165, Cys-168, and Thr-171 each contribute to the Na(+) site.

Belongs to the peptidase T1B family. HslV subfamily. As to quaternary structure, a double ring-shaped homohexamer of HslV is capped on each side by a ring-shaped HslU homohexamer. The assembly of the HslU/HslV complex is dependent on binding of ATP.

The protein localises to the cytoplasm. It carries out the reaction ATP-dependent cleavage of peptide bonds with broad specificity.. Allosterically activated by HslU binding. Its function is as follows. Protease subunit of a proteasome-like degradation complex believed to be a general protein degrading machinery. The polypeptide is ATP-dependent protease subunit HslV (Bacillus cytotoxicus (strain DSM 22905 / CIP 110041 / 391-98 / NVH 391-98)).